Consider the following 399-residue polypeptide: L-methionine gamma-lyase (399 aa).

Pyridoxal 5'-phosphate-binding positions include Tyr-59 to Arg-61 and Gly-89 to Met-90. Tyr-114 contributes to the substrate binding site. A pyridoxal 5'-phosphate-binding site is contributed by Ser-209–Thr-211. Lys-212 carries the N6-(pyridoxal phosphate)lysine modification. Substrate is bound at residue Arg-376.

The protein belongs to the trans-sulfuration enzymes family. L-methionine gamma-lyase subfamily. Homotetramer; dimer of active dimers. The cofactor is pyridoxal 5'-phosphate.

The enzyme catalyses L-methionine + H2O = methanethiol + 2-oxobutanoate + NH4(+). In terms of biological role, catalyzes the alpha,gamma-elimination of L-methionine to produce methanethiol, 2-oxobutanoate and ammonia. The polypeptide is L-methionine gamma-lyase (Pseudomonas deceptionensis).